Here is a 200-residue protein sequence, read N- to C-terminus: Putative 3-methyladenine DNA glycosylase (200 aa).

This sequence belongs to the DNA glycosylase MPG family.

The chain is Putative 3-methyladenine DNA glycosylase from Shouchella clausii (strain KSM-K16) (Alkalihalobacillus clausii).